Here is a 398-residue protein sequence, read N- to C-terminus: uncharacterized protein (398 aa).

Belongs to the class-V pyridoxal-phosphate-dependent aminotransferase family. Homodimer.

Its function is as follows. Is essential for optimal growth. This is an uncharacterized protein from Mycobacterium tuberculosis (strain CDC 1551 / Oshkosh).